The chain runs to 567 residues: Arginine--tRNA ligase (567 aa).

The 'HIGH' region signature appears at 121–131 (ANPNGPLHVGH).

This sequence belongs to the class-I aminoacyl-tRNA synthetase family.

The protein resides in the cytoplasm. It catalyses the reaction tRNA(Arg) + L-arginine + ATP = L-arginyl-tRNA(Arg) + AMP + diphosphate. In Methanosarcina acetivorans (strain ATCC 35395 / DSM 2834 / JCM 12185 / C2A), this protein is Arginine--tRNA ligase.